Consider the following 255-residue polypeptide: Aliphatic sulfonates import ATP-binding protein SsuB (255 aa).

The ABC transporter domain occupies 12-233 (LLLNAVSKHY…RLGSVRLAEL (222 aa)). 44 to 51 (GRSGGGKS) lines the ATP pocket.

It belongs to the ABC transporter superfamily. Aliphatic sulfonates importer (TC 3.A.1.17.2) family. In terms of assembly, the complex is composed of two ATP-binding proteins (SsuB), two transmembrane proteins (SsuC) and a solute-binding protein (SsuA).

The protein resides in the cell inner membrane. It carries out the reaction ATP + H2O + aliphatic sulfonate-[sulfonate-binding protein]Side 1 = ADP + phosphate + aliphatic sulfonateSide 2 + [sulfonate-binding protein]Side 1.. In terms of biological role, part of the ABC transporter complex SsuABC involved in aliphatic sulfonates import. Responsible for energy coupling to the transport system. The sequence is that of Aliphatic sulfonates import ATP-binding protein SsuB from Shigella sonnei (strain Ss046).